The sequence spans 715 residues: Polyribonucleotide nucleotidyltransferase (715 aa).

Residues Asp-493 and Asp-499 each coordinate Mg(2+). One can recognise a KH domain in the interval 560 to 619 (PRMITVKINPEKIRDVIGKGGSVIRALTEETGTTIDISDDGVVTIASTSSEGMAEAKKRI). The S1 motif domain maps to 629-697 (GQVYEGTVLK…EKGRVRLSAK (69 aa)).

It belongs to the polyribonucleotide nucleotidyltransferase family. It depends on Mg(2+) as a cofactor.

The protein localises to the cytoplasm. It carries out the reaction RNA(n+1) + phosphate = RNA(n) + a ribonucleoside 5'-diphosphate. Its function is as follows. Involved in mRNA degradation. Catalyzes the phosphorolysis of single-stranded polyribonucleotides processively in the 3'- to 5'-direction. This Burkholderia orbicola (strain MC0-3) protein is Polyribonucleotide nucleotidyltransferase.